Consider the following 157-residue polypeptide: S-ribosylhomocysteine lyase (157 aa).

The Fe cation site is built by His54, His58, and Cys124.

This sequence belongs to the LuxS family. As to quaternary structure, homodimer. The cofactor is Fe cation.

It catalyses the reaction S-(5-deoxy-D-ribos-5-yl)-L-homocysteine = (S)-4,5-dihydroxypentane-2,3-dione + L-homocysteine. Involved in the synthesis of autoinducer 2 (AI-2) which is secreted by bacteria and is used to communicate both the cell density and the metabolic potential of the environment. The regulation of gene expression in response to changes in cell density is called quorum sensing. Catalyzes the transformation of S-ribosylhomocysteine (RHC) to homocysteine (HC) and 4,5-dihydroxy-2,3-pentadione (DPD). This chain is S-ribosylhomocysteine lyase, found in Pediococcus pentosaceus (strain ATCC 25745 / CCUG 21536 / LMG 10740 / 183-1w).